The chain runs to 360 residues: Protein RecA (360 aa).

69 to 76 (GPESSGKT) is a binding site for ATP.

This sequence belongs to the RecA family.

The protein resides in the cytoplasm. Its function is as follows. Can catalyze the hydrolysis of ATP in the presence of single-stranded DNA, the ATP-dependent uptake of single-stranded DNA by duplex DNA, and the ATP-dependent hybridization of homologous single-stranded DNAs. It interacts with LexA causing its activation and leading to its autocatalytic cleavage. In Trichodesmium erythraeum (strain IMS101), this protein is Protein RecA.